A 361-amino-acid chain; its full sequence is MGSATNTPQINSDEEENFLFAMQLASASVLPMVLKSAIELDLLELIKKSGAGAFVSPVDLAAQLPTTNPDAHVMLDRILRLLTSYAILECRLKTLPDGGVERLYGLAPVCKFLTKNEDGVSMAPLTLMNQDKVLMESWYHLSDAVVDGGIPFNKAYGMTAFEYHGTDPRFNKVFNQGMSNHSTITMKKILETYTGFDGLKTVVDVGGGTGATLNMIVSKYPSIKGINFDLPHVIEDAPSYPGVEHVGGDMFVSVPKGDAIFMKWICHDWSDEHCVKFLKNCYDALPQNGKVILAECVLPEAPDTGLATKNVVHIDVIMLAHNPGGKERTEKEFQGLAKAAGFKQFNKACCAYNTWIMELLK.

Substrate is bound at residue 128 to 134 (MNQDKVL). A substrate binding region spans residues 160–178 (AFEYHGTDPRFNKVFNQGM). The S-adenosyl-L-methionine site is built by G206, D229, D249, M250, and K263. The Proton acceptor role is filled by H267.

This sequence belongs to the class I-like SAM-binding methyltransferase superfamily. Cation-independent O-methyltransferase family. COMT subfamily. Homodimer.

The catalysed reaction is (E)-caffeate + S-adenosyl-L-methionine = (E)-ferulate + S-adenosyl-L-homocysteine + H(+). Its pathway is aromatic compound metabolism; phenylpropanoid biosynthesis. Catalyzes the conversion of caffeic acid to ferulic acid and of 5-hydroxyferulic acid to sinapic acid. The resulting products may subsequently be converted to the corresponding alcohols that are incorporated into lignins. The polypeptide is Caffeic acid 3-O-methyltransferase 1 (COMT1) (Ocimum basilicum (Sweet basil)).